The sequence spans 626 residues: Chaperone protein HtpG (626 aa).

Positions Met1–Arg339 are a; substrate-binding. The b stretch occupies residues Glu340–Lys555. Residues Leu556–Gly626 form a c region.

This sequence belongs to the heat shock protein 90 family. As to quaternary structure, homodimer.

The protein resides in the cytoplasm. Molecular chaperone. Has ATPase activity. The sequence is that of Chaperone protein HtpG from Aggregatibacter actinomycetemcomitans (Actinobacillus actinomycetemcomitans).